Consider the following 271-residue polypeptide: 4-hydroxy-tetrahydrodipicolinate reductase (271 aa).

Residue 8 to 13 coordinates NAD(+); it reads GITGRM. Arg-35 provides a ligand contact to NADP(+). Residues 100-102 and 124-127 each bind NAD(+); these read GST and APNM. The Proton donor/acceptor role is filled by His-157. Position 158 (His-158) interacts with (S)-2,3,4,5-tetrahydrodipicolinate. Catalysis depends on Lys-161, which acts as the Proton donor. 167–168 is a (S)-2,3,4,5-tetrahydrodipicolinate binding site; it reads GT.

The protein belongs to the DapB family.

Its subcellular location is the cytoplasm. It catalyses the reaction (S)-2,3,4,5-tetrahydrodipicolinate + NAD(+) + H2O = (2S,4S)-4-hydroxy-2,3,4,5-tetrahydrodipicolinate + NADH + H(+). It carries out the reaction (S)-2,3,4,5-tetrahydrodipicolinate + NADP(+) + H2O = (2S,4S)-4-hydroxy-2,3,4,5-tetrahydrodipicolinate + NADPH + H(+). The protein operates within amino-acid biosynthesis; L-lysine biosynthesis via DAP pathway; (S)-tetrahydrodipicolinate from L-aspartate: step 4/4. Its function is as follows. Catalyzes the conversion of 4-hydroxy-tetrahydrodipicolinate (HTPA) to tetrahydrodipicolinate. The protein is 4-hydroxy-tetrahydrodipicolinate reductase of Myxococcus xanthus (strain DK1622).